A 151-amino-acid chain; its full sequence is UPF0756 membrane protein Dred_1676 (151 aa).

A run of 4 helical transmembrane segments spans residues 9-29 (VILL…CASV), 47-67 (THGL…PIAT), 75-95 (LLYN…ILAT), and 111-131 (IIFG…GQPV).

Belongs to the UPF0756 family.

It localises to the cell membrane. The protein is UPF0756 membrane protein Dred_1676 of Desulforamulus reducens (strain ATCC BAA-1160 / DSM 100696 / MI-1) (Desulfotomaculum reducens).